Here is a 490-residue protein sequence, read N- to C-terminus: Katanin p60 ATPase-containing subunit A-like 1 (490 aa).

Methionine 1 carries the post-translational modification N-acetylmethionine. The segment at 87–182 (SCQDEPVRDP…ASDGEIPKFD (96 aa)) is disordered. Positions 116–127 (SNREVRPLRKDM) are enriched in basic and acidic residues. The span at 128–139 (AGVGARGPVGRA) shows a compositional bias: low complexity. Basic and acidic residues predominate over residues 143–169 (SKSEKPSTSRDKDNRARGKDDKGRKNM). The residue at position 174 (serine 174) is a Phosphoserine. 248-255 (GPPGTGKT) lines the ATP pocket.

It belongs to the AAA ATPase family. Katanin p60 subunit A1 subfamily. A-like 1 sub-subfamily. As to quaternary structure, interacts with KATNB1 and KATNBL1.

It localises to the cytoplasm. Its subcellular location is the cytoskeleton. The protein resides in the spindle pole. It is found in the spindle. The catalysed reaction is n ATP + n H2O + a microtubule = n ADP + n phosphate + (n+1) alpha/beta tubulin heterodimers.. Regulates microtubule dynamics in Sertoli cells, a process that is essential for spermiogenesis and male fertility. Severs microtubules in an ATP-dependent manner, promoting rapid reorganization of cellular microtubule arrays. Has microtubule-severing activity in vitro. The protein is Katanin p60 ATPase-containing subunit A-like 1 of Otolemur garnettii (Small-eared galago).